The chain runs to 1143 residues: DNA polymerase III subunit alpha (1143 aa).

It belongs to the DNA polymerase type-C family. DnaE subfamily. In terms of assembly, DNA polymerase III contains a core (composed of alpha, epsilon and theta chains) that associates with a tau subunit. This core dimerizes to form the PolIII' complex. PolIII' associates with the gamma complex (composed of gamma, delta, delta', psi and chi chains) and with the beta chain to form the complete DNA polymerase III complex.

Its subcellular location is the cytoplasm. It catalyses the reaction DNA(n) + a 2'-deoxyribonucleoside 5'-triphosphate = DNA(n+1) + diphosphate. Functionally, DNA polymerase III is a complex, multichain enzyme responsible for most of the replicative synthesis in bacteria. This DNA polymerase also exhibits 3' to 5' exonuclease activity. The alpha chain is the DNA polymerase. This Caulobacter vibrioides (strain NA1000 / CB15N) (Caulobacter crescentus) protein is DNA polymerase III subunit alpha (dnaE1).